The primary structure comprises 549 residues: Dihydroxy-acid dehydratase (549 aa).

Position 78 (Asp-78) interacts with Mg(2+). Cys-119 serves as a coordination point for [2Fe-2S] cluster. Mg(2+) contacts are provided by Asp-120 and Lys-121. Lys-121 carries the post-translational modification N6-carboxylysine. Cys-191 serves as a coordination point for [2Fe-2S] cluster. Glu-441 lines the Mg(2+) pocket. The Proton acceptor role is filled by Ser-466.

Belongs to the IlvD/Edd family. Homodimer. The cofactor is [2Fe-2S] cluster. Mg(2+) is required as a cofactor.

The catalysed reaction is (2R)-2,3-dihydroxy-3-methylbutanoate = 3-methyl-2-oxobutanoate + H2O. It carries out the reaction (2R,3R)-2,3-dihydroxy-3-methylpentanoate = (S)-3-methyl-2-oxopentanoate + H2O. It functions in the pathway amino-acid biosynthesis; L-isoleucine biosynthesis; L-isoleucine from 2-oxobutanoate: step 3/4. Its pathway is amino-acid biosynthesis; L-valine biosynthesis; L-valine from pyruvate: step 3/4. Functions in the biosynthesis of branched-chain amino acids. Catalyzes the dehydration of (2R,3R)-2,3-dihydroxy-3-methylpentanoate (2,3-dihydroxy-3-methylvalerate) into 2-oxo-3-methylpentanoate (2-oxo-3-methylvalerate) and of (2R)-2,3-dihydroxy-3-methylbutanoate (2,3-dihydroxyisovalerate) into 2-oxo-3-methylbutanoate (2-oxoisovalerate), the penultimate precursor to L-isoleucine and L-valine, respectively. This Methanosphaera stadtmanae (strain ATCC 43021 / DSM 3091 / JCM 11832 / MCB-3) protein is Dihydroxy-acid dehydratase.